Consider the following 250-residue polypeptide: 3-deoxy-manno-octulosonate cytidylyltransferase (250 aa).

Belongs to the KdsB family.

The protein resides in the cytoplasm. The enzyme catalyses 3-deoxy-alpha-D-manno-oct-2-ulosonate + CTP = CMP-3-deoxy-beta-D-manno-octulosonate + diphosphate. The protein operates within nucleotide-sugar biosynthesis; CMP-3-deoxy-D-manno-octulosonate biosynthesis; CMP-3-deoxy-D-manno-octulosonate from 3-deoxy-D-manno-octulosonate and CTP: step 1/1. It participates in bacterial outer membrane biogenesis; lipopolysaccharide biosynthesis. Its function is as follows. Activates KDO (a required 8-carbon sugar) for incorporation into bacterial lipopolysaccharide in Gram-negative bacteria. This Francisella tularensis subsp. holarctica (strain FTNF002-00 / FTA) protein is 3-deoxy-manno-octulosonate cytidylyltransferase.